The following is a 1492-amino-acid chain: Cystic fibrosis transmembrane conductance regulator (1492 aa).

Residues 1–78 (MQRSPIEKAN…KLVNALRRCF (78 aa)) are Cytoplasmic-facing. Residues 79 to 99 (FWRFLFYGILLYFVEFTKAVQ) traverse the membrane as a helical segment. Positions 82–366 (FLFYGILLYF…SAIQTWYDSL (285 aa)) constitute an ABC transmembrane type-1 1 domain. Topologically, residues 100 to 123 (PLCLGRIIASYNAKNTYEREIAYY) are extracellular. A helical membrane pass occupies residues 124–147 (LALGLCLLFVVRTLFLHPAVFGLQ). Residues 148-196 (HLGMQMRIALFSLIYKKILKMSSRVLDKIDTGQLVSLLSNNLNKFDEGV) are Cytoplasmic-facing. A helical transmembrane segment spans residues 197–217 (AVAHFVWIAPVQVVLLMGLIW). The Extracellular portion of the chain corresponds to 218 to 223 (NELTEF). Residues 224–244 (VFCGLGFLIMLALFQAWLGKK) form a helical membrane-spanning segment. At 245 to 299 (MMQYRDKRAGKINERLAITSEIIDNIQSVKVYCWEDAMEKIIDDIRQVELKLTRK) the chain is on the cytoplasmic side. Residues 300–320 (VAYCRYFSSSAFFFSGFFVVF) form a helical membrane-spanning segment. Residues 321 to 340 (LSVVPYAFIHTIKLRRIFTT) lie on the Extracellular side of the membrane. The chain crosses the membrane as a helical span at residues 341–359 (ISYNIVLRMTVTRQFPSAI). The Cytoplasmic portion of the chain corresponds to 360 to 867 (QTWYDSLGAI…YLRYVTTNRN (508 aa)). ATP is bound by residues Trp402, Ser435, 459–466 (GSTGSGKS), and Gln494. The ABC transporter 1 domain maps to 424 to 647 (NGDDGLFFSN…KPDFSSQLLG (224 aa)). A disordered R region region spans residues 655-840 (SAERRNSILT…EEINEEDLKE (186 aa)). Residues 868 to 888 (LVFVLILCLVIFLAEVAASLA) form a helical membrane-spanning segment. The ABC transmembrane type-1 2 domain occupies 868–1169 (LVFVLILCLV…AVNSSIDVDG (302 aa)). Over 889–932 (GLWIISGLAINTGSQTNDTSTDLSHLSVFSKFITNGSHYYIFYI) the chain is Extracellular. Asn905 and Asn923 each carry an N-linked (GlcNAc...) asparagine glycan. Residues 933–953 (YVGLADSFLALGVIRGLPLVH) traverse the membrane as a discontinuously helical segment. Residues 954–1004 (TLVTVSKDLHKQMLHSVLQGPMTAFNKMKAGRILNRFIKDTAIIDDMLPLT) lie on the Cytoplasmic side of the membrane. The helical transmembrane segment at 1005–1025 (VFDFVQLILIVVGAICVVSVL) threads the bilayer. Residues 1026-1027 (QP) are Extracellular-facing. Residues 1028–1048 (YTLLAAIPVAVIFIMLRAYFL) traverse the membrane as a helical segment. At 1049 to 1109 (RTSQQLKQLE…TANWFLYLST (61 aa)) the chain is on the cytoplasmic side. Residues 1110-1130 (LRWFQMRIDIVFVLFFIAVTF) form a helical membrane-spanning segment. The Extracellular portion of the chain corresponds to 1131–1144 (IAIATHDVGEGQVG). The helical transmembrane segment at 1145–1165 (IILTLAMNITSTLQWAVNSSI) threads the bilayer. At 1166 to 1492 (DVDGLMRSVS…AEEDLQETRL (327 aa)) the chain is on the cytoplasmic side. One can recognise an ABC transporter 2 domain in the interval 1220 to 1453 (MMVNNLTAKY…ASLFKQVFGH (234 aa)). Residues Tyr1229 and 1254 to 1261 (GRTGAGKS) each bind ATP. The segment covering 1465 to 1474 (RNSSKRKTRP) has biased composition (basic residues). Residues 1465-1492 (RNSSKRKTRPKISALQEEAEEDLQETRL) form a disordered region. Residues 1481–1492 (EEAEEDLQETRL) show a composition bias toward acidic residues. Positions 1483-1485 (AEE) match the PDZ-binding motif.

This sequence belongs to the ABC transporter superfamily. ABCC family. CFTR transporter (TC 3.A.1.202) subfamily. In terms of assembly, monomer; does not require oligomerization for channel activity. May form oligomers in the membrane. In terms of processing, phosphorylated; cAMP treatment promotes phosphorylation and activates the channel. Dephosphorylation decreases the ATPase activity (in vitro). Phosphorylation at PKA sites activates the channel. Phosphorylation at PKC sites enhances the response to phosphorylation by PKA. In terms of tissue distribution, expressed in the rectal gland (at protein level).

It localises to the apical cell membrane. The protein resides in the early endosome membrane. Its subcellular location is the cell membrane. It is found in the recycling endosome membrane. The protein localises to the endoplasmic reticulum membrane. The enzyme catalyses ATP + H2O + closed Cl(-) channel = ADP + phosphate + open Cl(-) channel.. The catalysed reaction is chloride(in) = chloride(out). It carries out the reaction hydrogencarbonate(in) = hydrogencarbonate(out). It catalyses the reaction ATP + H2O = ADP + phosphate + H(+). Epithelial ion channel that plays an important role in the regulation of epithelial ion and water transport and fluid homeostasis. Mediates the transport of chloride ions across the cell membrane. Possesses an intrinsic ATPase activity and utilizes ATP to gate its channel; the passive flow of anions through the channel is gated by cycles of ATP binding and hydrolysis by the ATP-binding domains. The ion channel is also permeable to HCO(3)(-); selectivity depends on the extracellular chloride concentration. Exerts its function also by modulating the activity of other ion channels and transporters. Contributes to the regulation of the pH and the ion content of the epithelial fluid layer. The protein is Cystic fibrosis transmembrane conductance regulator of Squalus acanthias (Spiny dogfish).